Here is a 1010-residue protein sequence, read N- to C-terminus: Trifunctional purine biosynthetic protein adenosine-3 (1010 aa).

Alanine 2 is modified (N-acetylalanine). Serine 10 is modified (phosphoserine). The region spanning 111 to 318 is the ATP-grasp domain; that stretch reads KEFMDRHEIP…LYEVMQSTLD (208 aa). ATP is bound by residues 190–193, glutamate 197, arginine 220, and asparagine 229; that span reads EEFL. Residues glutamate 288 and asparagine 290 each contribute to the Mg(2+) site. Lysine 350 carries the N6-acetyllysine modification. Residues 434 to 809 form an AIRS domain region; the sequence is GLTYKDSGVD…NFPVQQKKAR (376 aa). Residues serine 440 and serine 467 each carry the phosphoserine modification. Phosphothreonine is present on threonine 682. The interval 810 to 1010 is GART domain; it reads VAVLISGTGS…DGKIHWAKEQ (201 aa). 818–820 is a N(1)-(5-phospho-beta-D-ribosyl)glycinamide binding site; that stretch reads GSN. (6R)-10-formyltetrahydrofolate-binding positions include arginine 871, 896 to 899, and asparagine 913; that span reads MRIL. Histidine 915 (proton donor) is an active-site residue. 947–951 contacts (6R)-10-formyltetrahydrofolate; the sequence is AEDVD. 977-980 contributes to the N(1)-(5-phospho-beta-D-ribosyl)glycinamide binding site; that stretch reads KVAE.

The protein in the N-terminal section; belongs to the GARS family. In the central section; belongs to the AIR synthase family. This sequence in the C-terminal section; belongs to the GART family. As to quaternary structure, homodimer. Mg(2+) serves as cofactor. Requires Mn(2+) as cofactor. In terms of tissue distribution, detected in liver, kidney and brain.

It catalyses the reaction 5-phospho-beta-D-ribosylamine + glycine + ATP = N(1)-(5-phospho-beta-D-ribosyl)glycinamide + ADP + phosphate + H(+). The enzyme catalyses 2-formamido-N(1)-(5-O-phospho-beta-D-ribosyl)acetamidine + ATP = 5-amino-1-(5-phospho-beta-D-ribosyl)imidazole + ADP + phosphate + H(+). The catalysed reaction is N(1)-(5-phospho-beta-D-ribosyl)glycinamide + (6R)-10-formyltetrahydrofolate = N(2)-formyl-N(1)-(5-phospho-beta-D-ribosyl)glycinamide + (6S)-5,6,7,8-tetrahydrofolate + H(+). The protein operates within purine metabolism; IMP biosynthesis via de novo pathway; 5-amino-1-(5-phospho-D-ribosyl)imidazole from N(2)-formyl-N(1)-(5-phospho-D-ribosyl)glycinamide: step 2/2. It participates in purine metabolism; IMP biosynthesis via de novo pathway; N(1)-(5-phospho-D-ribosyl)glycinamide from 5-phospho-alpha-D-ribose 1-diphosphate: step 2/2. It functions in the pathway purine metabolism; IMP biosynthesis via de novo pathway; N(2)-formyl-N(1)-(5-phospho-D-ribosyl)glycinamide from N(1)-(5-phospho-D-ribosyl)glycinamide (10-formyl THF route): step 1/1. In terms of biological role, trifunctional enzyme that catalyzes three distinct reactions as part of the 'de novo' inosine monophosphate biosynthetic pathway. The sequence is that of Trifunctional purine biosynthetic protein adenosine-3 (Gart) from Mus musculus (Mouse).